A 218-amino-acid polypeptide reads, in one-letter code: MSEFNKDDYLNDLPDPSDAEAAAQASSGADASAESGSAQDSAAQAPSNEGADAAPAAAEGEKTGEGQSDSADTLTPLGKAKKEAADYLEALQRERAEFINYRNRTQKEQERFRQHGIIDVLTALLPALDDIDRIREHSEMDDSFKAVATKIDKAFEKFGVEKFGEKGEDFDPTKHDAILHKPDADAEKETVDTVVEAGYRIGDRVIRAARVVVASPQN.

Residues 1-78 form a disordered region; sequence MSEFNKDDYL…DSADTLTPLG (78 aa). Positions 14–58 are enriched in low complexity; that stretch reads PDPSDAEAAAQASSGADASAESGSAQDSAAQAPSNEGADAAPAAA.

It belongs to the GrpE family. As to quaternary structure, homodimer.

The protein resides in the cytoplasm. Its function is as follows. Participates actively in the response to hyperosmotic and heat shock by preventing the aggregation of stress-denatured proteins, in association with DnaK and GrpE. It is the nucleotide exchange factor for DnaK and may function as a thermosensor. Unfolded proteins bind initially to DnaJ; upon interaction with the DnaJ-bound protein, DnaK hydrolyzes its bound ATP, resulting in the formation of a stable complex. GrpE releases ADP from DnaK; ATP binding to DnaK triggers the release of the substrate protein, thus completing the reaction cycle. Several rounds of ATP-dependent interactions between DnaJ, DnaK and GrpE are required for fully efficient folding. This Bifidobacterium longum (strain NCC 2705) protein is Protein GrpE.